A 210-amino-acid chain; its full sequence is Large ribosomal subunit protein uL3 (210 aa).

The protein belongs to the universal ribosomal protein uL3 family. In terms of assembly, part of the 50S ribosomal subunit. Forms a cluster with proteins L14 and L19.

One of the primary rRNA binding proteins, it binds directly near the 3'-end of the 23S rRNA, where it nucleates assembly of the 50S subunit. This chain is Large ribosomal subunit protein uL3, found in Lawsonia intracellularis (strain PHE/MN1-00).